The primary structure comprises 199 residues: uncharacterized protein (199 aa).

Residues F7 to I27 traverse the membrane as a helical segment.

It belongs to the band 7/mec-2 family.

Its subcellular location is the membrane. This is an uncharacterized protein from Methanocaldococcus jannaschii (strain ATCC 43067 / DSM 2661 / JAL-1 / JCM 10045 / NBRC 100440) (Methanococcus jannaschii).